Here is a 354-residue protein sequence, read N- to C-terminus: Methylthioribose-1-phosphate isomerase (354 aa).

Substrate is bound by residues 48-50, R95, and Q202; that span reads RGA. The active-site Proton donor is the D243. 253 to 254 lines the substrate pocket; sequence NK.

Belongs to the eIF-2B alpha/beta/delta subunits family. MtnA subfamily.

The enzyme catalyses 5-(methylsulfanyl)-alpha-D-ribose 1-phosphate = 5-(methylsulfanyl)-D-ribulose 1-phosphate. The protein operates within amino-acid biosynthesis; L-methionine biosynthesis via salvage pathway; L-methionine from S-methyl-5-thio-alpha-D-ribose 1-phosphate: step 1/6. Its function is as follows. Catalyzes the interconversion of methylthioribose-1-phosphate (MTR-1-P) into methylthioribulose-1-phosphate (MTRu-1-P). The polypeptide is Methylthioribose-1-phosphate isomerase (Roseiflexus castenholzii (strain DSM 13941 / HLO8)).